A 188-amino-acid polypeptide reads, in one-letter code: ATP synthase subunit delta (188 aa).

Belongs to the ATPase delta chain family. As to quaternary structure, F-type ATPases have 2 components, F(1) - the catalytic core - and F(0) - the membrane proton channel. F(1) has five subunits: alpha(3), beta(3), gamma(1), delta(1), epsilon(1). F(0) has three main subunits: a(1), b(2) and c(10-14). The alpha and beta chains form an alternating ring which encloses part of the gamma chain. F(1) is attached to F(0) by a central stalk formed by the gamma and epsilon chains, while a peripheral stalk is formed by the delta and b chains.

The protein localises to the cell inner membrane. Functionally, f(1)F(0) ATP synthase produces ATP from ADP in the presence of a proton or sodium gradient. F-type ATPases consist of two structural domains, F(1) containing the extramembraneous catalytic core and F(0) containing the membrane proton channel, linked together by a central stalk and a peripheral stalk. During catalysis, ATP synthesis in the catalytic domain of F(1) is coupled via a rotary mechanism of the central stalk subunits to proton translocation. In terms of biological role, this protein is part of the stalk that links CF(0) to CF(1). It either transmits conformational changes from CF(0) to CF(1) or is implicated in proton conduction. The protein is ATP synthase subunit delta of Rhizobium etli (strain ATCC 51251 / DSM 11541 / JCM 21823 / NBRC 15573 / CFN 42).